Reading from the N-terminus, the 421-residue chain is 3-phosphoshikimate 1-carboxyvinyltransferase (421 aa).

The 3-phosphoshikimate site is built by lysine 20, serine 21, and arginine 25. Phosphoenolpyruvate is bound at residue lysine 20. The phosphoenolpyruvate site is built by glycine 90 and arginine 117. Residues serine 162, serine 163, glutamine 164, serine 190, aspartate 304, and lysine 331 each coordinate 3-phosphoshikimate. Residue glutamine 164 coordinates phosphoenolpyruvate. Aspartate 304 (proton acceptor) is an active-site residue. Positions 335 and 376 each coordinate phosphoenolpyruvate.

This sequence belongs to the EPSP synthase family. As to quaternary structure, monomer.

The protein localises to the cytoplasm. The enzyme catalyses 3-phosphoshikimate + phosphoenolpyruvate = 5-O-(1-carboxyvinyl)-3-phosphoshikimate + phosphate. It participates in metabolic intermediate biosynthesis; chorismate biosynthesis. In terms of biological role, catalyzes the transfer of the enolpyruvyl moiety of phosphoenolpyruvate (PEP) to the 5-hydroxyl of shikimate-3-phosphate (S3P) to produce enolpyruvyl shikimate-3-phosphate and inorganic phosphate. In Methanothrix thermoacetophila (strain DSM 6194 / JCM 14653 / NBRC 101360 / PT) (Methanosaeta thermophila), this protein is 3-phosphoshikimate 1-carboxyvinyltransferase.